Consider the following 426-residue polypeptide: Glutamate-1-semialdehyde 2,1-aminomutase (426 aa).

K265 is modified (N6-(pyridoxal phosphate)lysine).

Belongs to the class-III pyridoxal-phosphate-dependent aminotransferase family. HemL subfamily. As to quaternary structure, homodimer. It depends on pyridoxal 5'-phosphate as a cofactor.

Its subcellular location is the cytoplasm. The enzyme catalyses (S)-4-amino-5-oxopentanoate = 5-aminolevulinate. The protein operates within porphyrin-containing compound metabolism; protoporphyrin-IX biosynthesis; 5-aminolevulinate from L-glutamyl-tRNA(Glu): step 2/2. The chain is Glutamate-1-semialdehyde 2,1-aminomutase from Cronobacter sakazakii (strain ATCC BAA-894) (Enterobacter sakazakii).